Reading from the N-terminus, the 56-residue chain is MLYWSIVFFVVALVAGVLGFTGIAAATADIAQILFVIFLVLFVISIIAGGFRRNRL.

2 helical membrane-spanning segments follow: residues 6–26 and 30–50; these read IVFF…IAAA and IAQI…IAGG.

It belongs to the UPF0391 family.

Its subcellular location is the cell membrane. This is UPF0391 membrane protein HCH_04387 from Hahella chejuensis (strain KCTC 2396).